Consider the following 147-residue polypeptide: Peptide deformylase (147 aa).

The Fe cation site is built by cysteine 88 and histidine 130. Residue glutamate 131 is part of the active site. Histidine 134 contributes to the Fe cation binding site.

Belongs to the polypeptide deformylase family. Fe(2+) is required as a cofactor.

The catalysed reaction is N-terminal N-formyl-L-methionyl-[peptide] + H2O = N-terminal L-methionyl-[peptide] + formate. Its function is as follows. Removes the formyl group from the N-terminal Met of newly synthesized proteins. Requires at least a dipeptide for an efficient rate of reaction. N-terminal L-methionine is a prerequisite for activity but the enzyme has broad specificity at other positions. The protein is Peptide deformylase of Alkaliphilus metalliredigens (strain QYMF).